The sequence spans 358 residues: MTIKIAIDCMGGDHGVSVTVPAAISFLASHDDAAVVLVGLPDAIQAQLKKLRAQDHPRVSVVPATEVITMDDPVEVALRKKKDSSMRVAVTQVKEGLAGACISAGNTGALMAVSRYVLKTLEGIERPAIATTIPNEQGWGTTVLDLGANADCEPEHLLQFARMAEAMVAVVDHKEHPTVGLLNIGEEVIKGNEVVKRAGELLRASELNFHGNVEGNDIFKGTTDIVVCDGFVGNVALKSTEGLAKMIGGMIKEEFTRSWFTKLLAGIAMPVLSRLAKRLDPARYNGASLLGLRGLVIKSHGSADAHSFEWAIKRGYDAAKNGVIERIARAFADKTSAAGAAPASPETAPTPHPSTRAA.

The tract at residues 336-358 is disordered; sequence SAAGAAPASPETAPTPHPSTRAA.

It belongs to the PlsX family. As to quaternary structure, homodimer. Probably interacts with PlsY.

The protein localises to the cytoplasm. It catalyses the reaction a fatty acyl-[ACP] + phosphate = an acyl phosphate + holo-[ACP]. It participates in lipid metabolism; phospholipid metabolism. Catalyzes the reversible formation of acyl-phosphate (acyl-PO(4)) from acyl-[acyl-carrier-protein] (acyl-ACP). This enzyme utilizes acyl-ACP as fatty acyl donor, but not acyl-CoA. The polypeptide is Phosphate acyltransferase (Cupriavidus pinatubonensis (strain JMP 134 / LMG 1197) (Cupriavidus necator (strain JMP 134))).